We begin with the raw amino-acid sequence, 93 residues long: Acylphosphatase (93 aa).

Positions 5–93 (CIIAWVHGRV…EELTGFRIRY (89 aa)) constitute an Acylphosphatase-like domain. Active-site residues include Arg20 and Asn38.

Belongs to the acylphosphatase family.

The catalysed reaction is an acyl phosphate + H2O = a carboxylate + phosphate + H(+). The protein is Acylphosphatase (acyP) of Citrobacter koseri (strain ATCC BAA-895 / CDC 4225-83 / SGSC4696).